We begin with the raw amino-acid sequence, 283 residues long: Endochitinase At2g43620 (283 aa).

The N-terminal stretch at 1 to 28 (MATLRAMLKNAFILFLFTLTIMAKTVFS) is a signal peptide. The 38-residue stretch at 29 to 66 (QQCGTTGCAANLCCSRYGYCGTTDAYCGTGCRSGPCSS) folds into the Chitin-binding type-1 domain. 4 disulfides stabilise this stretch: C31–C42, C36–C48, C41–C55, and C59–C64. The interval 88–283 (DTIENVVTPA…GITPGANLSC (196 aa)) is catalytic. E150 serves as the catalytic Proton donor. N280 is a glycosylation site (N-linked (GlcNAc...) asparagine).

It belongs to the glycosyl hydrolase 19 family. Chitinase class I subfamily.

The catalysed reaction is Random endo-hydrolysis of N-acetyl-beta-D-glucosaminide (1-&gt;4)-beta-linkages in chitin and chitodextrins.. The polypeptide is Endochitinase At2g43620 (Arabidopsis thaliana (Mouse-ear cress)).